Consider the following 296-residue polypeptide: NmrA-like family domain-containing protein 1 (296 aa).

Residues 11 to 16 (GATGAQ), 37 to 41 (RSPGR), 58 to 59 (DQ), 79 to 81 (TNF), Lys-133, and 155 to 158 (YYEN) contribute to the NADP(+) site.

The protein belongs to the NmrA-type oxidoreductase family. As to quaternary structure, homodimer.

It localises to the cytoplasm. The protein localises to the perinuclear region. The protein resides in the nucleus. In terms of biological role, redox sensor protein. Undergoes restructuring and subcellular redistribution in response to changes in intracellular NADPH/NADP(+) levels. The protein is NmrA-like family domain-containing protein 1 (NMRAL1) of Gallus gallus (Chicken).